Reading from the N-terminus, the 517-residue chain is Synaptic vesicular amine transporter (517 aa).

Over 1 to 20 the chain is Cytoplasmic; that stretch reads MALSDLVLLRWLRDSRHSRK. Residues 21 to 41 traverse the membrane as a helical segment; that stretch reads LILFIVFLALLLDNMLLTVVV. Residues 42–132 lie on the Extracellular side of the membrane; it reads PIIPSYLYSI…EDKDLLNENV (91 aa). N-linked (GlcNAc...) asparagine glycosylation is found at asparagine 56, asparagine 83, asparagine 84, asparagine 91, and asparagine 113. Residues 100 to 119 form a disordered region; sequence ESPKATTTQHTVTNTTVPPD. Residues 105–115 are compositionally biased toward low complexity; the sequence is TTTQHTVTNTT. Cysteine 120 and cysteine 327 are oxidised to a cystine. Residues 133-153 traverse the membrane as a helical segment; that stretch reads QVGLLFASKATVQLLTNPFIG. Residues 154-162 lie on the Cytoplasmic side of the membrane; that stretch reads LLTNRIGYP. Residues 163–183 form a helical membrane-spanning segment; that stretch reads IPMFAGFCIMFISTVMFAFSS. Residues 184–192 lie on the Extracellular side of the membrane; that stretch reads SYAFLLIAR. The chain crosses the membrane as a helical span at residues 193-213; that stretch reads SLQGIGSSCSSVAGMGMLASV. Residues 214–222 are Cytoplasmic-facing; that stretch reads YTDDEERGN. Residues 223 to 245 traverse the membrane as a helical segment; it reads AMGIALGGLAMGVLVGPPFGSVL. Positions 231 and 235 each coordinate serotonin. The Extracellular segment spans residues 246–251; it reads YEFVGK. Residues 252-274 traverse the membrane as a helical segment; it reads TAPFLVLAALVLLDGAIQLFVLQ. The Cytoplasmic portion of the chain corresponds to 275 to 294; the sequence is PSRVQPESQKGTPLTTLLKD. A helical membrane pass occupies residues 295-314; sequence PYILIAAGSICFANMGIAML. Asparagine 308, isoleucine 311, glutamate 315, phenylalanine 337, and tyrosine 344 together coordinate serotonin. At 315–331 the chain is on the extracellular side; sequence EPALPIWMMETMCSRKW. The chain crosses the membrane as a helical span at residues 332-355; the sequence is QLGVAFLPASISYLIGTNIFGILA. Residues 356-360 lie on the Cytoplasmic side of the membrane; it reads HKMGR. A helical membrane pass occupies residues 361–381; the sequence is WLCALLGMIVVGISILCIPFA. Residues 382 to 392 lie on the Extracellular side of the membrane; that stretch reads KNIYGLIAPNF. A helical membrane pass occupies residues 393–413; it reads GVGFAIGMVDSSMMPIMGYLV. Residue aspartate 402 participates in serotonin binding. At 414 to 417 the chain is on the cytoplasmic side; sequence DLRH. A helical membrane pass occupies residues 418–438; it reads VSVYGSVYAIADVAFCMGYAI. Residue tyrosine 436 participates in serotonin binding. Residues 439-443 lie on the Extracellular side of the membrane; that stretch reads GPSAG. Residues 444-465 traverse the membrane as a helical segment; it reads GAIAKAIGFPWLMTIIGIIDIV. Residues 466–517 are Cytoplasmic-facing; it reads FAPLCFFLRSPPAKEEKMAILMDHNCPIKTKMYTQNNVQPYPVGDDEESESD. Phosphoserine; by CK2 occurs at positions 514 and 516.

It belongs to the major facilitator superfamily. Vesicular transporter family. Interacts with SLC6A3. In terms of tissue distribution, expressed in striata and substantia nigra.

The protein resides in the cytoplasmic vesicle. Its subcellular location is the secretory vesicle. The protein localises to the synaptic vesicle membrane. It localises to the secretory vesicle membrane. It is found in the cell projection. The protein resides in the axon. Its subcellular location is the dendrite. The catalysed reaction is serotonin(in) + 2 H(+)(out) = serotonin(out) + 2 H(+)(in). It catalyses the reaction dopamine(in) + 2 H(+)(out) = dopamine(out) + 2 H(+)(in). The enzyme catalyses histamine(in) + 2 H(+)(out) = histamine(out) + 2 H(+)(in). Its activity is regulated as follows. Strongly inhibited by reserpine and tetrabenazine. Also inhibited to a lesser extent by ketanserin and fenfluramine. Reserpine and ketanserin inhibit by blocking the substrate-binding pocket. Tetrabenazine traps SLC18A2/VMAT2 in an occluded conformation and its inhibition is specific to SLC18A2/VMAT2 but not SLC18A1/VMAT1. Its function is as follows. Electrogenic antiporter that exchanges one cationic monoamine with two intravesicular protons across the membrane of secretory and synaptic vesicles. Uses the electrochemical proton gradient established by the V-type proton-pump ATPase to accumulate high concentrations of monoamines inside the vesicles prior to their release via exocytosis. Transports a variety of catecholamines such as dopamine, adrenaline and noradrenaline, histamine, and indolamines such as serotonin. Regulates the transvesicular monoaminergic gradient that determines the quantal size. Mediates somatodendritic dopamine release in hippocampal neurons, likely as part of a regulated secretory pathway that integrates retrograde synaptic signals. Acts as a primary transporter for striatal dopamine loading ensuring impulse-dependent release of dopamine at the synaptic cleft. Responsible for histamine and serotonin storage and subsequent corelease from mast cell granules. This Mus musculus (Mouse) protein is Synaptic vesicular amine transporter (Slc18a2).